Consider the following 1189-residue polypeptide: Magnesium-chelatase subunit H (1189 aa).

This sequence belongs to the Mg-chelatase subunit H family.

The catalysed reaction is protoporphyrin IX + Mg(2+) + ATP + H2O = Mg-protoporphyrin IX + ADP + phosphate + 3 H(+). It participates in porphyrin-containing compound metabolism; bacteriochlorophyll biosynthesis (light-independent). Functionally, involved in bacteriochlorophyll pigment biosynthesis; introduces a magnesium ion into protoporphyrin IX to yield Mg-protoroporphyrin IX. The protein is Magnesium-chelatase subunit H (bchH) of Rhodobacter capsulatus (strain ATCC BAA-309 / NBRC 16581 / SB1003).